Consider the following 477-residue polypeptide: Protein RdxB (477 aa).

Over 1–29 the chain is Cytoplasmic; that stretch reads MTSPDTQTSSLYAKREPVFPKRVSGKFRS. A helical membrane pass occupies residues 30–50; it reads LKWWIMGVTLGIYYIAPWLRW. At 51-81 the chain is on the periplasmic side; that stretch reads DRGPNLPDQAILVDLANRRFFFFMIEIWPHE. The chain crosses the membrane as a helical span at residues 82–102; it reads FYFVAGLLIMAGLGLFLFTSA. Residues 103-154 lie on the Cytoplasmic side of the membrane; the sequence is AGRVWCGYACPQTVWTDLFILVERWVEGDRNARIRLLRQRWDLEKTRKYLTK. Residues 155–175 traverse the membrane as a helical segment; sequence WTLWLLIGLATGGAWVFYFTD. The Periplasmic portion of the chain corresponds to 176-189; sequence APTLLVDLLTGNAH. Residues 190–210 traverse the membrane as a helical segment; that stretch reads PVAYITMATLTATTFAFGGFA. The Cytoplasmic portion of the chain corresponds to 211–338; the sequence is REQICIYACP…SAWRHVFRLR (128 aa). In terms of domain architecture, 4Fe-4S ferredoxin-type spans 253 to 281; it reads EPLSPDQGDCIDCMACVNVCPMGIDIRDG. [4Fe-4S] cluster contacts are provided by C262, C265, C268, C272, C286, C289, C292, and C296. The helical transmembrane segment at 339-359 threads the bilayer; that stretch reads TLIYTALWSGVGLALIVALFL. Topologically, residues 360-477 are periplasmic; the sequence is RSPIDINVTP…HDTIFNGRGN (118 aa).

It depends on [4Fe-4S] cluster as a cofactor.

Its subcellular location is the cell membrane. Functionally, involved in a membrane generated redox signal; required to maintain repression of photosynthesis gene expression in the presence of oxygen. The sequence is that of Protein RdxB (rdxB) from Cereibacter sphaeroides (strain ATCC 17023 / DSM 158 / JCM 6121 / CCUG 31486 / LMG 2827 / NBRC 12203 / NCIMB 8253 / ATH 2.4.1.) (Rhodobacter sphaeroides).